Reading from the N-terminus, the 302-residue chain is Dihydroorotate dehydrogenase B (NAD(+)), catalytic subunit (302 aa).

FMN contacts are provided by residues Ser-23 and 47 to 48 (KG). Residues Lys-47 and 71 to 75 (NSVGL) each bind substrate. Residues Asn-101 and Asn-128 each contribute to the FMN site. Asn-128 is a binding site for substrate. The Nucleophile role is filled by Cys-131. The FMN site is built by Lys-166 and Ile-192. Residue 193–194 (NT) coordinates substrate. Residues Gly-218, 244-245 (GG), and 266-267 (GT) contribute to the FMN site.

This sequence belongs to the dihydroorotate dehydrogenase family. Type 1 subfamily. In terms of assembly, heterotetramer of 2 PyrK and 2 PyrD type B subunits. It depends on FMN as a cofactor.

It localises to the cytoplasm. It carries out the reaction (S)-dihydroorotate + NAD(+) = orotate + NADH + H(+). It functions in the pathway pyrimidine metabolism; UMP biosynthesis via de novo pathway; orotate from (S)-dihydroorotate (NAD(+) route): step 1/1. In terms of biological role, catalyzes the conversion of dihydroorotate to orotate with NAD(+) as electron acceptor. The polypeptide is Dihydroorotate dehydrogenase B (NAD(+)), catalytic subunit (pyrD) (Alkaliphilus metalliredigens (strain QYMF)).